The chain runs to 98 residues: NADH-ubiquinone oxidoreductase chain 4L (98 aa).

3 helical membrane passes run 1–21, 29–49, and 61–81; these read MSITYMNMFMAFTISLLGLLM, SLLCLEGMMLSLFVMMTMAIL, and IILLVFAACEAALGLSLLVMV.

Belongs to the complex I subunit 4L family. As to quaternary structure, core subunit of respiratory chain NADH dehydrogenase (Complex I) which is composed of 45 different subunits.

It is found in the mitochondrion inner membrane. The catalysed reaction is a ubiquinone + NADH + 5 H(+)(in) = a ubiquinol + NAD(+) + 4 H(+)(out). Functionally, core subunit of the mitochondrial membrane respiratory chain NADH dehydrogenase (Complex I) which catalyzes electron transfer from NADH through the respiratory chain, using ubiquinone as an electron acceptor. Part of the enzyme membrane arm which is embedded in the lipid bilayer and involved in proton translocation. The polypeptide is NADH-ubiquinone oxidoreductase chain 4L (MT-ND4L) (Mesophylla macconnelli (MacConnell's bat)).